Reading from the N-terminus, the 393-residue chain is Putative 8-amino-7-oxononanoate synthase (393 aa).

Residue arginine 23 participates in substrate binding. 110 to 111 contributes to the pyridoxal 5'-phosphate binding site; that stretch reads GY. Histidine 135 lines the substrate pocket. Residues serine 183, 208–211, and 239–242 contribute to the pyridoxal 5'-phosphate site; these read DEAH and TLSK. Lysine 242 carries the post-translational modification N6-(pyridoxal phosphate)lysine. Threonine 362 is a binding site for substrate.

This sequence belongs to the class-II pyridoxal-phosphate-dependent aminotransferase family. BioF subfamily. In terms of assembly, homodimer. Requires pyridoxal 5'-phosphate as cofactor.

It catalyses the reaction 6-carboxyhexanoyl-[ACP] + L-alanine + H(+) = (8S)-8-amino-7-oxononanoate + holo-[ACP] + CO2. It participates in cofactor biosynthesis; biotin biosynthesis. In terms of biological role, catalyzes the decarboxylative condensation of pimeloyl-[acyl-carrier protein] and L-alanine to produce 8-amino-7-oxononanoate (AON), [acyl-carrier protein], and carbon dioxide. This chain is Putative 8-amino-7-oxononanoate synthase (bioF), found in Trichodesmium erythraeum (strain IMS101).